The following is a 272-amino-acid chain: MEALRLGFSPCPNDTFIFYALVHGRVESPVPLEPVLEDVETLNRWALEGRLPLTKLSYAAYAQVRDRYVALRSGGALGRGVGPLVVARGPLQALEGLRVAVPGRHTTAYFLLSLYAQGFVPVEVRYDRILPMVAQGEVEAGLIIHESRFTYPRYGLVQVVDLGAWWEERTGLPLPLGAILARRDLGEGLIRALDEAVRRSVAYALAHPEEALDYMRAHAQELSDEVIWAHVHTYVNAFSLDVGEEGERAVARLFAEAEARGLAAPSPRPLFV.

Substrate contacts are provided by residues 55-57 (KLS) and 107-108 (TA). Catalysis depends on histidine 145, which acts as the Proton acceptor.

Belongs to the MqnA/MqnD family. MqnD subfamily.

The enzyme catalyses cyclic dehypoxanthinylfutalosinate = 1,4-dihydroxy-6-naphthoate + dihydroxyacetone. Its pathway is quinol/quinone metabolism; menaquinone biosynthesis. In terms of biological role, catalyzes the conversion of cyclic dehypoxanthine futalosine (cyclic DHFL) into 1,4-dihydroxy-6-naphthoate, a step in the biosynthesis of menaquinone (MK, vitamin K2). This is 1,4-dihydroxy-6-naphtoate synthase from Thermus thermophilus (strain ATCC 27634 / DSM 579 / HB8).